The sequence spans 416 residues: Gamma-glutamyl phosphate reductase (416 aa).

The protein belongs to the gamma-glutamyl phosphate reductase family.

The protein resides in the cytoplasm. The catalysed reaction is L-glutamate 5-semialdehyde + phosphate + NADP(+) = L-glutamyl 5-phosphate + NADPH + H(+). It functions in the pathway amino-acid biosynthesis; L-proline biosynthesis; L-glutamate 5-semialdehyde from L-glutamate: step 2/2. Functionally, catalyzes the NADPH-dependent reduction of L-glutamate 5-phosphate into L-glutamate 5-semialdehyde and phosphate. The product spontaneously undergoes cyclization to form 1-pyrroline-5-carboxylate. The polypeptide is Gamma-glutamyl phosphate reductase (Petrotoga mobilis (strain DSM 10674 / SJ95)).